The chain runs to 210 residues: MAVPQLYYFTIRGFGEYIRLLFLDNGIKFEDIRFDYEGNEWQEFKKGMLLGQLPCLKVDGQEIVQTGAIMRHLGRVHGLNGSNEQEATFLDMFFEGVRDVRMKYVRYIYYDEGTREDCVNKTIPEALVKLEELFKAHSGDFIIGNKISYADYILFEELDVYHVLDANILDKFPTLKSFWERMWKRPNLNAYLEKRKADKVWINAIEKGMN.

The GST N-terminal domain maps to 2-81 (AVPQLYYFTI…HLGRVHGLNG (80 aa)). Glutathione-binding positions include Tyr8, Trp41, Lys45, 52-53 (QL), and 65-66 (QT). The 118-residue stretch at 83-200 (NEQEATFLDM…YLEKRKADKV (118 aa)) folds into the GST C-terminal domain.

Belongs to the GST superfamily. Pi family. As to quaternary structure, homodimer. In terms of tissue distribution, expressed in cells at the mouth and adjacent to the pharyngeal bulbs of the head and also in the tail.

It carries out the reaction RX + glutathione = an S-substituted glutathione + a halide anion + H(+). Its function is as follows. Conjugation of reduced glutathione to a wide number of exogenous and endogenous hydrophobic electrophiles. Responsible for approximately one-third of 4-hydroxy-2-nonenal conjugation. May play a role in the detoxification of reactive oxygen species produced during pathogenic bacterial infection. This is Glutathione S-transferase P 10 from Caenorhabditis elegans.